Here is a 341-residue protein sequence, read N- to C-terminus: MTKDILILAVETSCDETSVSVIKNGRDILSNTVLSQIESHKRFGGVVPEVASRHHVEGITTTINEALVDADVSMEDIDAIAVTEGPGLIGALLIGVNAAKALAFAYDKPLIPVHHIAGHIYANHIEEPLTFPLIALIVSGGHTELVYMKDHLSFEVIGETRDDAVGEAYDKVARTIGLNYPGGPQVDRLAAEGEDTYSFPRVWLDKDSYDFSFSGLKSAVINQLHNQRQKNIPIIEANVATSFQNSVVEVLTFKAIQACKEYSVQRLIVAGGVASNKGLRQSLADQCKVNDIQLTIPSPKLCTDNAAMIGVAGHYLYQQGRFADLALNGHSNIDLEEYSAE.

Residues H115 and H119 each contribute to the Fe cation site. Substrate-binding positions include 137–141 (IVSGG), D170, G183, D187, and N276. Residue D304 participates in Fe cation binding.

The protein belongs to the KAE1 / TsaD family. Fe(2+) is required as a cofactor.

The protein resides in the cytoplasm. It catalyses the reaction L-threonylcarbamoyladenylate + adenosine(37) in tRNA = N(6)-L-threonylcarbamoyladenosine(37) in tRNA + AMP + H(+). In terms of biological role, required for the formation of a threonylcarbamoyl group on adenosine at position 37 (t(6)A37) in tRNAs that read codons beginning with adenine. Is involved in the transfer of the threonylcarbamoyl moiety of threonylcarbamoyl-AMP (TC-AMP) to the N6 group of A37, together with TsaE and TsaB. TsaD likely plays a direct catalytic role in this reaction. This Staphylococcus aureus (strain JH1) protein is tRNA N6-adenosine threonylcarbamoyltransferase.